The following is a 38-amino-acid chain: Large ribosomal subunit protein bL36 (38 aa).

Belongs to the bacterial ribosomal protein bL36 family.

This Acinetobacter baylyi (strain ATCC 33305 / BD413 / ADP1) protein is Large ribosomal subunit protein bL36.